We begin with the raw amino-acid sequence, 172 residues long: Keratin-associated protein 13-1 (172 aa).

Tandem repeats lie at residues 46-55 (CQLGSSLYRG), 56-65 (CQQTCWEPTS), 66-75 (CQTSYVESSP), 76-85 (CQTSCYRPRT), and 92-101 (CQTTYSGSLG). The tract at residues 46–101 (CQLGSSLYRGCQQTCWEPTSCQTSYVESSPCQTSCYRPRTSLLCSPCQTTYSGSLG) is 5 X 10 AA approximate repeats.

Belongs to the PMG family. Interacts with hair keratins. As to expression, weak expression seen in the late matrix and entire cortex area of the hair follicle.

Functionally, in the hair cortex, hair keratin intermediate filaments are embedded in an interfilamentous matrix, consisting of hair keratin-associated proteins (KRTAP), which are essential for the formation of a rigid and resistant hair shaft through their extensive disulfide bond cross-linking with abundant cysteine residues of hair keratins. The matrix proteins include the high-sulfur and high-glycine-tyrosine keratins. The polypeptide is Keratin-associated protein 13-1 (KRTAP13-1) (Homo sapiens (Human)).